The sequence spans 75 residues: Kappa-thalatoxin-Cad2a (75 aa).

The first 22 residues, 1–22 (MKFQMIAAVLLIAFCLCVVVTA), serve as a signal peptide directing secretion. Residues 23-40 (RMELQDVEDMKNGSFQKR) constitute a propeptide that is removed on maturation. The ShKT domain occupies 43–75 (CIDTIPKSRCTAFQCKNSMKYRLSFCRKTCGTC). 3 disulfides stabilise this stretch: Cys43/Cys75, Cys52/Cys68, and Cys57/Cys72.

Belongs to the sea anemone type 1 potassium channel toxin family. Type 1a subfamily.

It localises to the secreted. Its subcellular location is the nematocyst. Its function is as follows. Inhibits voltage-gated potassium channels (Kv) with higher potency for Kv1.1/KCNA1 and Kv1.3/KCNA3. The protein is Kappa-thalatoxin-Cad2a of Cryptodendrum adhaesivum (Adhesive sea anemone).